The following is a 322-amino-acid chain: MSIMQASCIALVSSLTLTVIFLPLLIKFMHSHHEGQEIRDEGPKWHQKKSGTPTMGGTIFVIAAVISVIWVTAWQHSLNKVVWILVISLLGYGIIGFLDDGIKLYYKRNLGLRAWQKLALQIIIAVVIVLIASSDHFNFGLYIPFAGVVHSVALFVIFIIFWLVGFSNAVNLSDGLDGLATGLSVVAYGTYAYIAFKQKNFAILAFCMSVIGGLIAFFIFNHKPAKIFMGDAGSLALGGGLATVSIMLNRPWSLLLVGIVFVCETASVIMQVISFQTTGKRIFKMTPIHHHFEMLGWSEWKVDIVFWIVGLVGSILYLAIWG.

Helical transmembrane passes span Ala-6–Ile-26, Thr-54–Trp-74, Val-82–Ile-102, Ile-122–Tyr-142, Phe-145–Gly-165, Leu-176–Phe-196, Asn-200–Phe-220, Ile-227–Met-247, Leu-255–Phe-275, and Val-302–Gly-322.

This sequence belongs to the glycosyltransferase 4 family. MraY subfamily. Mg(2+) is required as a cofactor.

It localises to the cell membrane. It catalyses the reaction UDP-N-acetyl-alpha-D-muramoyl-L-alanyl-gamma-D-glutamyl-L-lysyl-D-alanyl-D-alanine + di-trans,octa-cis-undecaprenyl phosphate = Mur2Ac(oyl-L-Ala-gamma-D-Glu-L-Lys-D-Ala-D-Ala)-di-trans,octa-cis-undecaprenyl diphosphate + UMP. It participates in cell wall biogenesis; peptidoglycan biosynthesis. Its function is as follows. Catalyzes the initial step of the lipid cycle reactions in the biosynthesis of the cell wall peptidoglycan: transfers peptidoglycan precursor phospho-MurNAc-pentapeptide from UDP-MurNAc-pentapeptide onto the lipid carrier undecaprenyl phosphate, yielding undecaprenyl-pyrophosphoryl-MurNAc-pentapeptide, known as lipid I. This is Phospho-N-acetylmuramoyl-pentapeptide-transferase from Lactobacillus helveticus (strain DPC 4571).